The chain runs to 96 residues: Mitochondrial import inner membrane translocase subunit Tim13-A (96 aa).

A Twin CX3C motif motif is present at residues 47–70 (CFRKCIGKPGGSLDNSEQKCIAMC). Disulfide bonds link Cys-47-Cys-70 and Cys-51-Cys-66.

This sequence belongs to the small Tim family. Heterohexamer; composed of 3 copies of TIMM8 (TIMM8A or TIMM8B) and 3 copies of TIMM13, named soluble 70 kDa complex. Associates with the TIM22 complex, whose core is composed of TIMM22.

The protein resides in the mitochondrion inner membrane. Its function is as follows. Mitochondrial intermembrane chaperone that participates in the import and insertion of some multi-pass transmembrane proteins into the mitochondrial inner membrane. Also required for the transfer of beta-barrel precursors from the TOM complex to the sorting and assembly machinery (SAM complex) of the outer membrane. Acts as a chaperone-like protein that protects the hydrophobic precursors from aggregation and guide them through the mitochondrial intermembrane space. The TIMM8-TIMM13 complex mediates the import of some proteins while the predominant TIMM9-TIMM10 70 kDa complex mediates the import of much more proteins. The chain is Mitochondrial import inner membrane translocase subunit Tim13-A (timm13-a) from Xenopus laevis (African clawed frog).